A 364-amino-acid polypeptide reads, in one-letter code: Aminomethyltransferase (364 aa).

This sequence belongs to the GcvT family. The glycine cleavage system is composed of four proteins: P, T, L and H.

The catalysed reaction is N(6)-[(R)-S(8)-aminomethyldihydrolipoyl]-L-lysyl-[protein] + (6S)-5,6,7,8-tetrahydrofolate = N(6)-[(R)-dihydrolipoyl]-L-lysyl-[protein] + (6R)-5,10-methylene-5,6,7,8-tetrahydrofolate + NH4(+). Its function is as follows. The glycine cleavage system catalyzes the degradation of glycine. The sequence is that of Aminomethyltransferase from Escherichia coli O157:H7.